Here is a 685-residue protein sequence, read N- to C-terminus: Probable serine/threonine-protein kinase CPE1738 (685 aa).

Positions 10–275 (YELLQCVGEG…LEKIKKDPNV (266 aa)) constitute a Protein kinase domain. ATP-binding positions include 16 to 24 (VGEGGMSFV) and K39. E143 acts as the Proton acceptor in catalysis. The tract at residues 277-339 (ISSKSAEDED…NIQTKPQKAI (63 aa)) is disordered. Residues 306 to 329 (EPDEDDEDDDEYYEDDEDEDEEEN) are compositionally biased toward acidic residues. PASTA domains are found at residues 376 to 440 (GKDV…TVSG), 441 to 508 (GEGQ…TISK), 513 to 581 (KSET…TINY), and 589 to 648 (EKPK…TMEE). Residues 480 to 500 (VPRGEVISQSPNANESVDKGS) are disordered. The interval 623 to 685 (DTAKVKSVSN…PKQPEQSGNN (63 aa)) is disordered. Low complexity-rich tracts occupy residues 627-645 (VKSV…VSVT) and 654-685 (QPTQ…SGNN).

The protein belongs to the protein kinase superfamily. Ser/Thr protein kinase family.

It catalyses the reaction L-seryl-[protein] + ATP = O-phospho-L-seryl-[protein] + ADP + H(+). It carries out the reaction L-threonyl-[protein] + ATP = O-phospho-L-threonyl-[protein] + ADP + H(+). The protein is Probable serine/threonine-protein kinase CPE1738 of Clostridium perfringens (strain 13 / Type A).